Here is a 331-residue protein sequence, read N- to C-terminus: 5-dehydro-2-deoxygluconokinase (331 aa).

Belongs to the carbohydrate kinase PfkB family.

The enzyme catalyses 5-dehydro-2-deoxy-D-gluconate + ATP = 6-phospho-5-dehydro-2-deoxy-D-gluconate + ADP + H(+). It participates in polyol metabolism; myo-inositol degradation into acetyl-CoA; acetyl-CoA from myo-inositol: step 5/7. In terms of biological role, catalyzes the phosphorylation of 5-dehydro-2-deoxy-D-gluconate (2-deoxy-5-keto-D-gluconate or DKG) to 6-phospho-5-dehydro-2-deoxy-D-gluconate (DKGP). The sequence is that of 5-dehydro-2-deoxygluconokinase from Halalkalibacterium halodurans (strain ATCC BAA-125 / DSM 18197 / FERM 7344 / JCM 9153 / C-125) (Bacillus halodurans).